A 331-amino-acid chain; its full sequence is Adenosine deaminase (331 aa).

Positions 12 and 14 each coordinate Zn(2+). 3 residues coordinate substrate: His-14, Asp-16, and Gly-170. His-197 provides a ligand contact to Zn(2+). Catalysis depends on Glu-200, which acts as the Proton donor. Asp-278 serves as a coordination point for Zn(2+). Residue Asp-279 participates in substrate binding.

The protein belongs to the metallo-dependent hydrolases superfamily. Adenosine and AMP deaminases family. Adenosine deaminase subfamily. The cofactor is Zn(2+).

It catalyses the reaction adenosine + H2O + H(+) = inosine + NH4(+). The catalysed reaction is 2'-deoxyadenosine + H2O + H(+) = 2'-deoxyinosine + NH4(+). Catalyzes the hydrolytic deamination of adenosine and 2-deoxyadenosine. This is Adenosine deaminase from Shewanella denitrificans (strain OS217 / ATCC BAA-1090 / DSM 15013).